Here is a 922-residue protein sequence, read N- to C-terminus: Centrosomal protein of 104 kDa (922 aa).

Residues E210 to M277 adopt a coiled-coil conformation. Over residues P307–Q318 the composition is skewed to low complexity. Disordered stretches follow at residues P307–A333 and L348–E419. Over residues P396–R407 the composition is skewed to basic and acidic residues. 2 HEAT repeats span residues A526–I564 and G601–H637. Composition is skewed to basic and acidic residues over residues T673–K697 and Q714–N725. Disordered stretches follow at residues T673 to I741 and P880 to R922. Positions K678 to A705 form a coiled coil.

As to quaternary structure, interacts with CCP110 and CEP97. Interacts with ARMC9, TOGARAM1, CCDC66 and CSPP1. In terms of tissue distribution, expressed predominantly in the brain. Also detected, although at much lower levels, in the heart and the liver. Within the brain, expressed in the cerebral cortex, hippocampus, cerebellum and brainstem.

The protein resides in the cell projection. Its subcellular location is the cilium. It is found in the cytoplasm. The protein localises to the cytoskeleton. It localises to the microtubule organizing center. The protein resides in the centrosome. Its subcellular location is the centriole. It is found in the spindle pole. Its function is as follows. Required for ciliogenesis and for structural integrity at the ciliary tip. The chain is Centrosomal protein of 104 kDa (Cep104) from Rattus norvegicus (Rat).